The following is a 1134-amino-acid chain: Mediator of RNA polymerase II transcription subunit 12 (1134 aa).

This sequence belongs to the Mediator complex subunit 12 family. In terms of assembly, component of the srb8-11 complex which consists of rb8, srb9(TRAP240), srb10 and srb11. The srb8-11 complex associates with the Mediator complex thereby blocking association with RNA polymerase II and leading to reduced transcriptional activation by Mediator.

Its subcellular location is the nucleus. In terms of biological role, component of the srb8-11 complex. The srb8-11 complex is a regulatory module of the Mediator complex which is itself involved in regulation of basal and activated RNA polymerase II-dependent transcription. The srb8-11 complex may be involved in the transcriptional repression of a subset of genes regulated by Mediator. It may inhibit the association of the Mediator complex with RNA polymerase II to form the holoenzyme complex. The sequence is that of Mediator of RNA polymerase II transcription subunit 12 (srb8) from Schizosaccharomyces pombe (strain 972 / ATCC 24843) (Fission yeast).